Here is a 370-residue protein sequence, read N- to C-terminus: tRNA-specific 2-thiouridylase MnmA (370 aa).

ATP contacts are provided by residues 20 to 27 (GMSGGVDS) and Met46. The tract at residues 106-108 (NPD) is interaction with target base in tRNA. The active-site Nucleophile is Cys111. A disulfide bridge connects residues Cys111 and Cys207. Gly135 contacts ATP. The segment at 157–159 (KDQ) is interaction with tRNA. Residue Cys207 is the Cysteine persulfide intermediate of the active site. An interaction with tRNA region spans residues 318–319 (RY).

This sequence belongs to the MnmA/TRMU family.

Its subcellular location is the cytoplasm. The catalysed reaction is S-sulfanyl-L-cysteinyl-[protein] + uridine(34) in tRNA + AH2 + ATP = 2-thiouridine(34) in tRNA + L-cysteinyl-[protein] + A + AMP + diphosphate + H(+). Catalyzes the 2-thiolation of uridine at the wobble position (U34) of tRNA, leading to the formation of s(2)U34. This is tRNA-specific 2-thiouridylase MnmA from Polynucleobacter asymbioticus (strain DSM 18221 / CIP 109841 / QLW-P1DMWA-1) (Polynucleobacter necessarius subsp. asymbioticus).